Here is a 224-residue protein sequence, read N- to C-terminus: Ribonuclease 3 (224 aa).

The RNase III domain maps to 5 to 127; sequence LERLCRRLNY…ILAAIYLDGG (123 aa). Residue E40 coordinates Mg(2+). D44 is a catalytic residue. 2 residues coordinate Mg(2+): D113 and E116. The active site involves E116. The region spanning 154–224 is the DRBM domain; it reads DAKTQLQEFL…AKAMLEQLQG (71 aa).

Belongs to the ribonuclease III family. Homodimer. The cofactor is Mg(2+).

It is found in the cytoplasm. It carries out the reaction Endonucleolytic cleavage to 5'-phosphomonoester.. Its function is as follows. Digests double-stranded RNA. Involved in the processing of primary rRNA transcript to yield the immediate precursors to the large and small rRNAs (23S and 16S). Processes some mRNAs, and tRNAs when they are encoded in the rRNA operon. Processes pre-crRNA and tracrRNA of type II CRISPR loci if present in the organism. The chain is Ribonuclease 3 from Legionella pneumophila subsp. pneumophila (strain Philadelphia 1 / ATCC 33152 / DSM 7513).